We begin with the raw amino-acid sequence, 561 residues long: Dihydroxy-acid dehydratase (561 aa).

Cys-50 provides a ligand contact to [2Fe-2S] cluster. Asp-82 is a binding site for Mg(2+). Cys-123 lines the [2Fe-2S] cluster pocket. Mg(2+) contacts are provided by Asp-124 and Lys-125. Lys-125 is subject to N6-carboxylysine. Cys-195 contacts [2Fe-2S] cluster. Glu-447 serves as a coordination point for Mg(2+). The active-site Proton acceptor is the Ser-473.

Belongs to the IlvD/Edd family. As to quaternary structure, homodimer. The cofactor is [2Fe-2S] cluster. Requires Mg(2+) as cofactor.

The enzyme catalyses (2R)-2,3-dihydroxy-3-methylbutanoate = 3-methyl-2-oxobutanoate + H2O. The catalysed reaction is (2R,3R)-2,3-dihydroxy-3-methylpentanoate = (S)-3-methyl-2-oxopentanoate + H2O. It participates in amino-acid biosynthesis; L-isoleucine biosynthesis; L-isoleucine from 2-oxobutanoate: step 3/4. It functions in the pathway amino-acid biosynthesis; L-valine biosynthesis; L-valine from pyruvate: step 3/4. In terms of biological role, functions in the biosynthesis of branched-chain amino acids. Catalyzes the dehydration of (2R,3R)-2,3-dihydroxy-3-methylpentanoate (2,3-dihydroxy-3-methylvalerate) into 2-oxo-3-methylpentanoate (2-oxo-3-methylvalerate) and of (2R)-2,3-dihydroxy-3-methylbutanoate (2,3-dihydroxyisovalerate) into 2-oxo-3-methylbutanoate (2-oxoisovalerate), the penultimate precursor to L-isoleucine and L-valine, respectively. The polypeptide is Dihydroxy-acid dehydratase (Synechocystis sp. (strain ATCC 27184 / PCC 6803 / Kazusa)).